Consider the following 129-residue polypeptide: MRNVLIVMLGGFIGANLRYWLGEWMSSSSGFPTGTFVINAIGCFLLGWLLTYSEKNRLLSKEWSLLLGTGLIGSFTTFSTFSVETLLLIESAKYIVASLYVFGSIFLGIGLAYIGVRLALYCKKEEDIA.

4 helical membrane passes run 4–24 (VLIV…LGEW), 30–50 (GFPT…GWLL), 63–83 (WSLL…TFSV), and 95–115 (IVAS…AYIG). 2 residues coordinate Na(+): glycine 73 and threonine 76.

The protein belongs to the fluoride channel Fluc/FEX (TC 1.A.43) family.

Its subcellular location is the cell membrane. It carries out the reaction fluoride(in) = fluoride(out). Its activity is regulated as follows. Na(+) is not transported, but it plays an essential structural role and its presence is essential for fluoride channel function. Its function is as follows. Fluoride-specific ion channel. Important for reducing fluoride concentration in the cell, thus reducing its toxicity. This Oceanobacillus iheyensis (strain DSM 14371 / CIP 107618 / JCM 11309 / KCTC 3954 / HTE831) protein is Fluoride-specific ion channel FluC.